The chain runs to 570 residues: MKASQFFISTLKEAPAEAALASHKLMIRAGLIKANASGLYTWMPMGLRVLRKVENVVREEMARAGSVELLMPVVQPAELWQESGRWEFYGKELLRLKDRHDRDFCMGPTCEEVIADIVRKEINSYKQLPKNFYHIQTKFRDEVRPRFGVMRAREFVMKDAYSFHADYASLQTTYDAMYDAYCRIFTRLGLAFRPVAADTGSIGGTGSHEFQVLAESGEDVIAYSDTSDYAANIELAPTLPLKGERTAAQAELTKVHTPNVKTIESLVEFLNIPVEQTLKSIVVESENEGEIVLLLLRGDHEFNDIKAEKLAGVKSPLTMASSAAIVEQFGANGGSLGPVGFKGKVYADFATEKGADWVIGANEDGYHYTGFNFGRDAAEPEFVDLRNVVEGDESPDGQGRLKLARGIEVGHVFQLRDKYTQAMNVSFLDNNGKSQIMEMGCYGIGITRVVAAAIEQNNDEKGIIWTKAMAPFEVVIVPMNYKKSDAVREAADKIYAELLAAGADVLLDDRDERAGVLLNDSELLGIPHRIVIGDRALKEGNVEYAERRNNEAQAVAIGEIVARVTASLNG.

Belongs to the class-II aminoacyl-tRNA synthetase family. ProS type 1 subfamily. As to quaternary structure, homodimer.

It localises to the cytoplasm. The catalysed reaction is tRNA(Pro) + L-proline + ATP = L-prolyl-tRNA(Pro) + AMP + diphosphate. Catalyzes the attachment of proline to tRNA(Pro) in a two-step reaction: proline is first activated by ATP to form Pro-AMP and then transferred to the acceptor end of tRNA(Pro). As ProRS can inadvertently accommodate and process non-cognate amino acids such as alanine and cysteine, to avoid such errors it has two additional distinct editing activities against alanine. One activity is designated as 'pretransfer' editing and involves the tRNA(Pro)-independent hydrolysis of activated Ala-AMP. The other activity is designated 'posttransfer' editing and involves deacylation of mischarged Ala-tRNA(Pro). The misacylated Cys-tRNA(Pro) is not edited by ProRS. In Neisseria meningitidis serogroup C / serotype 2a (strain ATCC 700532 / DSM 15464 / FAM18), this protein is Proline--tRNA ligase.